We begin with the raw amino-acid sequence, 322 residues long: Gluconeogenesis factor (322 aa).

Residues threonine 13, 217 to 219 (NVM), 263 to 267 (KYAKE), and 300 to 301 (RH) each bind NAD(+).

Belongs to the gluconeogenesis factor family.

It localises to the cytoplasm. Required for morphogenesis under gluconeogenic growth conditions. The chain is Gluconeogenesis factor from Halalkalibacterium halodurans (strain ATCC BAA-125 / DSM 18197 / FERM 7344 / JCM 9153 / C-125) (Bacillus halodurans).